The sequence spans 710 residues: Early transcription factor 82 kDa subunit (710 aa).

Belongs to the poxviridae VETF large subunit family. In terms of assembly, heterodimer of a 70 kDa and a 82 kDa subunit. Part of the early transcription complex composed of ETF, RAP94/OPG109, and the DNA-directed RNA polymerase.

It localises to the virion. Acts with RNA polymerase to initiate transcription from early gene promoters. Is recruited by the RPO-associated protein of 94 kDa RAP94/OPG109 to form the early transcription complex, which also contains the core RNA polymerase. ETF heterodimer binds to early gene promoters. The polypeptide is Early transcription factor 82 kDa subunit (OPG133) (Variola virus (isolate Human/India/Ind3/1967) (VARV)).